A 138-amino-acid polypeptide reads, in one-letter code: Venom allergen 2 (138 aa).

A signal peptide spans 1–19; that stretch reads MKSFVLATCLLGFAQIIYA. Intrachain disulfides connect C34-C57, C81-C94, and C101-C122.

Belongs to the ant venom allergen 2/4 family. Homodimer; disulfide-linked. Expressed by the venom gland.

It is found in the secreted. The polypeptide is Venom allergen 2 (Solenopsis invicta (Red imported fire ant)).